A 358-amino-acid polypeptide reads, in one-letter code: sn-glycerol-3-phosphate import ATP-binding protein UgpC (358 aa).

In terms of domain architecture, ABC transporter spans 4 to 235; that stretch reads VELKQVRKTY…PATLFVASFI (232 aa). Residue 37 to 44 participates in ATP binding; that stretch reads GPSGCGKS.

It belongs to the ABC transporter superfamily. sn-glycerol-3-phosphate importer (TC 3.A.1.1.3) family. In terms of assembly, the complex is composed of two ATP-binding proteins (UgpC), two transmembrane proteins (UgpA and UgpE) and a solute-binding protein (UgpB).

It localises to the cell inner membrane. The enzyme catalyses sn-glycerol 3-phosphate(out) + ATP + H2O = sn-glycerol 3-phosphate(in) + ADP + phosphate + H(+). In terms of biological role, part of the ABC transporter complex UgpBAEC involved in sn-glycerol-3-phosphate (G3P) import. Responsible for energy coupling to the transport system. This Roseobacter denitrificans (strain ATCC 33942 / OCh 114) (Erythrobacter sp. (strain OCh 114)) protein is sn-glycerol-3-phosphate import ATP-binding protein UgpC.